A 294-amino-acid polypeptide reads, in one-letter code: Deubiquitinase OTUD6B (294 aa).

2 disordered regions span residues Met1–Leu46 and Ala67–Glu120. Composition is skewed to polar residues over residues Lys27–Pro36 and Pro73–Thr86. Residues Lys111 to Glu120 are compositionally biased toward basic and acidic residues. In terms of domain architecture, OTU spans Leu150–Leu287. The cys-loop stretch occupies residues Ile155–Cys161. The active site involves Asp158. Cys161 functions as the Nucleophile in the catalytic mechanism. Positions Ile222–Leu232 are variable-loop. A his-loop region spans residues Tyr270–His280. His280 is an active-site residue.

The enzyme catalyses Thiol-dependent hydrolysis of ester, thioester, amide, peptide and isopeptide bonds formed by the C-terminal Gly of ubiquitin (a 76-residue protein attached to proteins as an intracellular targeting signal).. In terms of biological role, deubiquitinating enzyme that may play a role in the ubiquitin-dependent regulation of different cellular processes. This Xenopus tropicalis (Western clawed frog) protein is Deubiquitinase OTUD6B (otud6b).